The following is a 256-amino-acid chain: DNA polymerase sliding clamp 2 (256 aa).

This sequence belongs to the PCNA family. In terms of assembly, homotrimer. The subunits circularize to form a toroid; DNA passes through its center. Replication factor C (RFC) is required to load the toroid on the DNA.

Functionally, sliding clamp subunit that acts as a moving platform for DNA processing. Responsible for tethering the catalytic subunit of DNA polymerase and other proteins to DNA during high-speed replication. The polypeptide is DNA polymerase sliding clamp 2 (Pyrobaculum aerophilum (strain ATCC 51768 / DSM 7523 / JCM 9630 / CIP 104966 / NBRC 100827 / IM2)).